Reading from the N-terminus, the 523-residue chain is Siroheme synthase (523 aa).

A precorrin-2 dehydrogenase /sirohydrochlorin ferrochelatase region spans residues 1-203 (MNTFPLFFKL…GNENEAIAQL (203 aa)). Residues 22–23 (DV) and 43–44 (PS) contribute to the NAD(+) site. S128 is subject to Phosphoserine. The segment at 231-523 (GEVYIVGAGP…DGGLEQLVID (293 aa)) is uroporphyrinogen-III C-methyltransferase. P240 is a binding site for S-adenosyl-L-methionine. D263 serves as the catalytic Proton acceptor. K285 (proton donor) is an active-site residue. S-adenosyl-L-methionine contacts are provided by residues 316-318 (GGD), I321, 346-347 (TA), M398, and A427.

It in the N-terminal section; belongs to the precorrin-2 dehydrogenase / sirohydrochlorin ferrochelatase family. This sequence in the C-terminal section; belongs to the precorrin methyltransferase family.

It catalyses the reaction uroporphyrinogen III + 2 S-adenosyl-L-methionine = precorrin-2 + 2 S-adenosyl-L-homocysteine + H(+). The enzyme catalyses precorrin-2 + NAD(+) = sirohydrochlorin + NADH + 2 H(+). The catalysed reaction is siroheme + 2 H(+) = sirohydrochlorin + Fe(2+). It participates in cofactor biosynthesis; adenosylcobalamin biosynthesis; precorrin-2 from uroporphyrinogen III: step 1/1. It functions in the pathway cofactor biosynthesis; adenosylcobalamin biosynthesis; sirohydrochlorin from precorrin-2: step 1/1. Its pathway is porphyrin-containing compound metabolism; siroheme biosynthesis; precorrin-2 from uroporphyrinogen III: step 1/1. The protein operates within porphyrin-containing compound metabolism; siroheme biosynthesis; siroheme from sirohydrochlorin: step 1/1. It participates in porphyrin-containing compound metabolism; siroheme biosynthesis; sirohydrochlorin from precorrin-2: step 1/1. Its function is as follows. Multifunctional enzyme that catalyzes the SAM-dependent methylations of uroporphyrinogen III at position C-2 and C-7 to form precorrin-2 via precorrin-1. Then it catalyzes the NAD-dependent ring dehydrogenation of precorrin-2 to yield sirohydrochlorin. Finally, it catalyzes the ferrochelation of sirohydrochlorin to yield siroheme. The chain is Siroheme synthase from Psychrobacter cryohalolentis (strain ATCC BAA-1226 / DSM 17306 / VKM B-2378 / K5).